The chain runs to 338 residues: Methionine import ATP-binding protein MetN (338 aa).

An ABC transporter domain is found at 2–241 (ISLDGIRKVF…PKEHITKEFV (240 aa)). 38–45 (GYSGAGKS) provides a ligand contact to ATP.

It belongs to the ABC transporter superfamily. Methionine importer (TC 3.A.1.24) family. The complex is composed of two ATP-binding proteins (MetN), two transmembrane proteins (MetI) and a solute-binding protein (MetQ).

Its subcellular location is the cell membrane. It carries out the reaction L-methionine(out) + ATP + H2O = L-methionine(in) + ADP + phosphate + H(+). The catalysed reaction is D-methionine(out) + ATP + H2O = D-methionine(in) + ADP + phosphate + H(+). Functionally, part of the ABC transporter complex MetNIQ involved in methionine import. Responsible for energy coupling to the transport system. This chain is Methionine import ATP-binding protein MetN, found in Halalkalibacterium halodurans (strain ATCC BAA-125 / DSM 18197 / FERM 7344 / JCM 9153 / C-125) (Bacillus halodurans).